The chain runs to 209 residues: Uracil phosphoribosyltransferase (209 aa).

5-phospho-alpha-D-ribose 1-diphosphate contacts are provided by residues Arg-79, Arg-104, and 131–139; that span reads DPMLATGVS. Uracil is bound by residues Ile-194 and 199-201; that span reads GDA. Asp-200 serves as a coordination point for 5-phospho-alpha-D-ribose 1-diphosphate.

Belongs to the UPRTase family. Mg(2+) serves as cofactor.

The enzyme catalyses UMP + diphosphate = 5-phospho-alpha-D-ribose 1-diphosphate + uracil. The protein operates within pyrimidine metabolism; UMP biosynthesis via salvage pathway; UMP from uracil: step 1/1. Allosterically activated by GTP. In terms of biological role, catalyzes the conversion of uracil and 5-phospho-alpha-D-ribose 1-diphosphate (PRPP) to UMP and diphosphate. This is Uracil phosphoribosyltransferase from Thermotoga maritima (strain ATCC 43589 / DSM 3109 / JCM 10099 / NBRC 100826 / MSB8).